The chain runs to 547 residues: uncharacterized protein (547 aa).

To B.pertussis prn N-terminal region.

This is an uncharacterized protein from Escherichia coli O157:H7.